The primary structure comprises 574 residues: Arginine--tRNA ligase (574 aa).

Residues 126 to 136 carry the 'HIGH' region motif; that stretch reads PNIAKRMHVGH.

This sequence belongs to the class-I aminoacyl-tRNA synthetase family. As to quaternary structure, monomer.

It localises to the cytoplasm. It catalyses the reaction tRNA(Arg) + L-arginine + ATP = L-arginyl-tRNA(Arg) + AMP + diphosphate. This Chloroflexus aurantiacus (strain ATCC 29366 / DSM 635 / J-10-fl) protein is Arginine--tRNA ligase.